A 434-amino-acid polypeptide reads, in one-letter code: Nicotinate phosphoribosyltransferase (434 aa).

His-242 carries the post-translational modification Phosphohistidine; by autocatalysis.

This sequence belongs to the NAPRTase family. In terms of processing, transiently phosphorylated on a His residue during the reaction cycle. Phosphorylation strongly increases the affinity for substrates and increases the rate of nicotinate D-ribonucleotide production. Dephosphorylation regenerates the low-affinity form of the enzyme, leading to product release.

It catalyses the reaction nicotinate + 5-phospho-alpha-D-ribose 1-diphosphate + ATP + H2O = nicotinate beta-D-ribonucleotide + ADP + phosphate + diphosphate. It participates in cofactor biosynthesis; NAD(+) biosynthesis; nicotinate D-ribonucleotide from nicotinate: step 1/1. Catalyzes the synthesis of beta-nicotinate D-ribonucleotide from nicotinate and 5-phospho-D-ribose 1-phosphate at the expense of ATP. This is Nicotinate phosphoribosyltransferase from Nitrobacter hamburgensis (strain DSM 10229 / NCIMB 13809 / X14).